The primary structure comprises 513 residues: Probable DNA primase large subunit (513 aa).

[4Fe-4S] cluster-binding residues include cysteine 315, cysteine 398, cysteine 415, and cysteine 457.

The protein belongs to the eukaryotic-type primase large subunit family. As to quaternary structure, heterodimer of a small subunit and a large subunit. [4Fe-4S] cluster serves as cofactor.

DNA primase is the polymerase that synthesizes small RNA primers for the Okazaki fragments made during discontinuous DNA replication. In Neurospora crassa (strain ATCC 24698 / 74-OR23-1A / CBS 708.71 / DSM 1257 / FGSC 987), this protein is Probable DNA primase large subunit.